Consider the following 548-residue polypeptide: MDSQRNLLIIALLFVSFMIWQAWEQDKNPQPQQQTTQTTTTAAGSAADQGVPASGQGKLITVKTDVLELTINTNGGDIEQALLLAYPKTLKSTEPFQLLETTPQFVYQAQSGLTGRDGPDNPANGPRPLYSVDKEAFVLADSQDEIVIPLTYTDKAGNVFTKTFTLKRGGYAVNVGYSVQNASEKPLEVSTFGQLKQTAALPTSRDTQTGGLSTMHTFRGAAFSTSDTKYEKYKFDTILDNENLNVSTKNGWVAMLQQYFTTAWVPQNNGTNNFYTANLGNGIVAIGYKSQPVLVQPGQTDKLQSVLWVGPAIQDKMAAVAPHLDLTVDYGWLWFISQPLFKLLKFIHSFLGNWGFSIIVITFIVRGIMYPLTKAQYTSMAKMRMLQPKIQAMRERLGDDKQRQSQEMMALYKAEKVNPLGGCFPLIIQMPIFLALYYMLSASVELRHAPFILWIHDLSAQDPYYILPIIMGATMFFIQKMSPTTVTDPMQQKIMTFMPVIFTVFFLWFPSGLVVYYIVSNLVTIIQQQLIYRGLEKRGLHSREKKKS.

Residues 6–26 (NLLIIALLFVSFMIWQAWEQD) traverse the membrane as a helical segment. The disordered stretch occupies residues 28–52 (NPQPQQQTTQTTTTAAGSAADQGVP). The span at 29 to 41 (PQPQQQTTQTTTT) shows a compositional bias: low complexity. Helical transmembrane passes span 345 to 365 (KFIH…TFIV), 420 to 440 (LGGC…YYML), 458 to 478 (LSAQ…MFFI), and 499 to 519 (PVIF…YYIV).

Belongs to the OXA1/ALB3/YidC family. Type 1 subfamily. In terms of assembly, interacts with the Sec translocase complex via SecD. Specifically interacts with transmembrane segments of nascent integral membrane proteins during membrane integration.

It localises to the cell inner membrane. Its function is as follows. Required for the insertion and/or proper folding and/or complex formation of integral membrane proteins into the membrane. Involved in integration of membrane proteins that insert both dependently and independently of the Sec translocase complex, as well as at least some lipoproteins. Aids folding of multispanning membrane proteins. This Klebsiella pneumoniae (strain 342) protein is Membrane protein insertase YidC.